A 609-amino-acid polypeptide reads, in one-letter code: Tyrosyl-DNA phosphodiesterase 1 (609 aa).

Residues 1–12 show a composition bias toward polar residues; that stretch reads MSQESSYGKWTI. A disordered region spans residues 1–155; the sequence is MSQESSYGKW…YETSGEGQDI (155 aa). Serine 61 bears the Phosphoserine mark. Residues 105-118 show a composition bias toward basic and acidic residues; that stretch reads QPKRVLPQEKKHVS. A phosphoserine mark is found at serine 119 and serine 132. Position 148 is a phosphothreonine (threonine 148). Serine 149 bears the Phosphoserine mark. Histidine 264 (nucleophile) is an active-site residue. Position 266 (lysine 266) interacts with substrate. Residues 401-404 form an interaction with DNA region; that stretch reads SIGS. The Proton donor/acceptor role is filled by histidine 494. Lysine 496 contributes to the substrate binding site.

The protein belongs to the tyrosyl-DNA phosphodiesterase family. In terms of assembly, monomer. In terms of tissue distribution, ubiquitous.

Its subcellular location is the nucleus. It is found in the cytoplasm. Functionally, DNA repair enzyme that can remove a variety of covalent adducts from DNA through hydrolysis of a 3'-phosphodiester bond, giving rise to DNA with a free 3' phosphate. Catalyzes the hydrolysis of dead-end complexes between DNA and the topoisomerase I active site tyrosine residue. Hydrolyzes 3'-phosphoglycolates on protruding 3' ends on DNA double-strand breaks due to DNA damage by radiation and free radicals. Acts on blunt-ended double-strand DNA breaks and on single-stranded DNA. Has low 3'exonuclease activity and can remove a single nucleoside from the 3'end of DNA and RNA molecules with 3'hydroxyl groups. Has no exonuclease activity towards DNA or RNA with a 3'phosphate. This Mus musculus (Mouse) protein is Tyrosyl-DNA phosphodiesterase 1 (Tdp1).